The primary structure comprises 551 residues: Putative transport protein CGSHiEE_03135 (551 aa).

5 consecutive transmembrane segments (helical) span residues 4–24, 28–48, 65–85, 95–115, and 157–177; these read IAITISLLALVAVIGLWIGHW, GVGLGIGGVLFGGIIVAHFTD, FGLILFVYTIGIQVGPGFFSS, AFAILIIVLGSIAVVLVHKIA, and VSYAMAYPFGICGILLAMWLI. RCK C-terminal domains lie at 191–275 and 277–360; these read RFNA…IIGY and VDAP…VIGN. The next 6 helical transmembrane spans lie at 370 to 390, 402 to 424, 438 to 458, 463 to 483, 492 to 512, and 529 to 549; these read MLPVFIGIGLGVLVGSIPFYI, AGGPLVVVLILARIGTIGKLYWF, IVLFLAVVGLKSGGSFFDTLV, LEWMGYGIFITFVPLIIAGTI, YLTICGLLAGSMTDPPALAFA, and VYPLVMFLRIMSPQLLAVLLW.

Belongs to the AAE transporter (TC 2.A.81) family. YidE subfamily.

The protein localises to the cell membrane. In Haemophilus influenzae (strain PittEE), this protein is Putative transport protein CGSHiEE_03135.